Consider the following 79-residue polypeptide: D-alanyl carrier protein (79 aa).

Residues 1 to 77 (MDTKQAVLDI…KIIAKVESLR (77 aa)) enclose the Carrier domain. At S35 the chain carries O-(pantetheine 4'-phosphoryl)serine.

The protein belongs to the DltC family. 4'-phosphopantetheine is transferred from CoA to a specific serine of apo-DCP.

The protein localises to the cytoplasm. It participates in cell wall biogenesis; lipoteichoic acid biosynthesis. Functionally, carrier protein involved in the D-alanylation of lipoteichoic acid (LTA). The loading of thioester-linked D-alanine onto DltC is catalyzed by D-alanine--D-alanyl carrier protein ligase DltA. The DltC-carried D-alanyl group is further transferred to cell membrane phosphatidylglycerol (PG) by forming an ester bond, probably catalyzed by DltD. D-alanylation of LTA plays an important role in modulating the properties of the cell wall in Gram-positive bacteria, influencing the net charge of the cell wall. The polypeptide is D-alanyl carrier protein (Lactobacillus gasseri (strain ATCC 33323 / DSM 20243 / BCRC 14619 / CIP 102991 / JCM 1131 / KCTC 3163 / NCIMB 11718 / NCTC 13722 / AM63)).